The sequence spans 471 residues: 3-isopropylmalate dehydratase large subunit (471 aa).

Residues C351, C414, and C417 each coordinate [4Fe-4S] cluster.

The protein belongs to the aconitase/IPM isomerase family. LeuC type 1 subfamily. In terms of assembly, heterodimer of LeuC and LeuD. Requires [4Fe-4S] cluster as cofactor.

The catalysed reaction is (2R,3S)-3-isopropylmalate = (2S)-2-isopropylmalate. It participates in amino-acid biosynthesis; L-leucine biosynthesis; L-leucine from 3-methyl-2-oxobutanoate: step 2/4. Functionally, catalyzes the isomerization between 2-isopropylmalate and 3-isopropylmalate, via the formation of 2-isopropylmaleate. This is 3-isopropylmalate dehydratase large subunit from Colwellia psychrerythraea (strain 34H / ATCC BAA-681) (Vibrio psychroerythus).